The primary structure comprises 129 residues: M-zodatoxin-Lt8h (129 aa).

A signal peptide spans methionine 1 to serine 20. Residues lysine 21 to arginine 60 constitute a propeptide that is removed on maturation.

It belongs to the cationic peptide 06 (cytoinsectotoxin) family. Expressed by the venom gland.

The protein localises to the secreted. Its function is as follows. Insecticidal, cytolytic and antimicrobial peptide. Has insecticidal activity against the flesh fly S.carnaria. Has antibacterial activity against the Gram-negative bacteria E.coli. Forms voltage-dependent, ion-permeable channels in membranes. At high concentration causes cell membrane lysis. The polypeptide is M-zodatoxin-Lt8h (cit 1-11) (Lachesana tarabaevi (Spider)).